Here is a 139-residue protein sequence, read N- to C-terminus: DNA-directed RNA polymerase II subunit Rpb4 (139 aa).

It belongs to the eukaryotic RPB4 RNA polymerase subunit family. RNA polymerase II consists of 12 different subunits.

The protein resides in the nucleus. Its subcellular location is the chromosome. In terms of biological role, DNA-dependent RNA polymerase catalyzes the transcription of DNA into RNA using the four ribonucleoside triphosphates as substrates. Associates with POLR2G. The protein is DNA-directed RNA polymerase II subunit Rpb4 of Drosophila melanogaster (Fruit fly).